The following is a 927-amino-acid chain: Nuclear factor of activated T-cells, cytoplasmic 2 (927 aa).

Positions 1–29 (MDVPEPQPDPDGGDGPGHEPGGSPQDELD) are disordered. 7 positions are modified to phosphoserine: serine 23, serine 53, serine 54, serine 56, serine 99, serine 107, and serine 110. Residues 111-116 (PRIEIT) are calcineurin-binding. The tract at residues 119 to 201 (HELMQAGGAL…CVSPNNAGPD (83 aa)) is transactivation domain A (TAD-A). Serine 136, serine 150, serine 170, serine 173, serine 174, serine 176, serine 177, serine 179, and serine 182 each carry phosphoserine. Residues 163 to 177 (YREPLCLSPASSGSS) are required for cytoplasmic retention of the phosphorylated form. Tandem repeats lie at residues 186-202 (SPYTSPCVSPNNAGPDD) and 215-231 (SPRTSPIMSPRTSLAED). The interval 186 to 292 (SPYTSPCVSP…PHVALQDDSI (107 aa)) is 3 X approximate SP repeats. Disordered regions lie at residues 203–299 (LCPQ…YPPT) and 322–341 (SKIWKTSPDPTPVSTAPSKA). 5 positions are modified to phosphoserine: serine 215, serine 219, serine 223, serine 238, and serine 245. The span at 216–226 (PRTSPIMSPRT) shows a compositional bias: polar residues. The short motif at 253-255 (KRR) is the Nuclear localization signal element. Serine 257, serine 270, serine 276, serine 278, serine 282, serine 328, and serine 365 each carry phosphoserine. Over residues 267–277 (PAASPQRSRSP) the composition is skewed to low complexity. The stretch at 274–290 (SRSPSPQPSPHVALQDD) is one 3; approximate repeat. The 183-residue stretch at 394-576 (ASLPPLEWPL…NPIECSQRSA (183 aa)) folds into the RHD domain. The DNA-binding element occupies 423 to 430 (RAHYETEG). Residues serine 757, serine 759, and serine 761 each carry the phosphoserine modification. 2 disordered regions span residues 790-812 (AGSQGQGQGSTLPHTSSASQQAS) and 841-903 (FGPS…QNLD). The segment covering 798-812 (GSTLPHTSSASQQAS) has biased composition (polar residues). Serine 860 is subject to Phosphoserine.

Member of the multicomponent NFATC transcription complex that consists of at least two components, a pre-existing cytoplasmic component NFATC2 and an inducible nuclear component NFATC1. Other members such as NFATC4, NFATC3 or members of the activating protein-1 family, MAF, GATA4 and Cbp/p300 can also bind the complex. The phosphorylated form specifically interacts with XPO1; which mediates nuclear export. NFATC proteins bind to DNA as monomers. Interacts with NFATC2IP. Interacts with FOXP3. Interacts with TBX21 ('Thr-302' phosphorylated form). Interacts with KAT2A. Interacts with HOMER2 and HOMER3; this interaction competes with calcineurin/PPP3CA-binding and hence prevents NFATC2 dephosphorylation and activation. Interacts with protein phosphatase PPP3CA/calcineurin A. Interacts with AKAP5 (via leucine zipper domain); this is required for NFATC2/NFAT1 recruitment to CRAC channels. In resting cells, phosphorylated by NFATC-kinase on at least 18 sites in the 99-365 region. Upon cell stimulation, all these sites except Ser-245 are dephosphorylated by calcineurin. Dephosphorylation induces a conformational change that simultaneously exposes an NLS and masks an NES, which results in nuclear localization. Simultaneously, one site among Ser-53; Ser-54 and Ser-56 is phosphorylated; which is required for full transcriptional activity. Post-translationally, ubiquitinated in endothelial cells by RNF213 downstream of the non-canonical Wnt signaling pathway, leading to its degradation by the proteasome. In terms of tissue distribution, expressed in spleen, heart, testis, brain, placenta, muscle and pancreas. Expressed in the thymus. Expressed in the lung. Expressed in cartilage.

The protein localises to the cytoplasm. It localises to the nucleus. In terms of biological role, plays a role in the inducible expression of cytokine genes in T cells, especially in the induction of the IL-2, IL-3, IL-4, TNF-alpha or GM-CSF. Promotes invasive migration through the activation of GPC6 expression and WNT5A signaling pathway. Is involved in the negative regulation of chondrogenesis. Recruited by AKAP5 to ORAI1 pore-forming subunit of CRAC channels in Ca(2+) signaling microdomains where store-operated Ca(2+) influx is coupled to calmodulin and calcineurin signaling and activation of NFAT-dependent transcriptional responses. This Mus musculus (Mouse) protein is Nuclear factor of activated T-cells, cytoplasmic 2 (Nfatc2).